Reading from the N-terminus, the 1194-residue chain is MEQDELLHQLVDPKSPINIESLLDTITALVNDCKIPVLMRMKSVDNFISRYERIVESVAALRMKATDFRQLKVIGRGAFGEVHLVRHTRTNTVYAMKMLNKDDMIKRADSAFFWEERDIMAHANSEWIVRLQYAFQDPRHLYMVMEYMPGGDLVNLMTSYEVSEKWTRFYTAEIVEALAALHNMGYIHRDVKPDNMLISRSGHIKLADFGTCVKMNSNGVVRCSTAVGTPDYISPEVLRNQGKDSEFGKEVDWWSVGVFIYEMLVGETPFYAEALVSTYANIMNHQTSLRFPDEPLISTQAKDIIKKFLSAAPERLGKNNVDEIRNHKFFKNDEWTFETLKDATPPIVPSLKSDDDTTHFEEIETRDRDNASDFQLPKTFNGNQLPFIGFTYSNEYSPVKKLLNGASSNGVQNGVENKPVVVQQPLTNGHSTGIPEEQYEEVVIELDSKKRELESLKDSISRTEIRAKLIETEKNSLSSKINDLERELKDNKERLRLGADSDTKVNELSVELRMSKEYNGEMENELSKFRDKCEQLKEDLRKKSGELAQEKNETQRVLQQKKNAEEAFAEIKRDHEMLQTREAEKSLQLKKALDERKENGAYQQSVAKATDAEWERKMQYYEKQLEQATDDRKREEQKRTAAEFDQSRVARKLAGIEANYELLQNDYTNMKEARKDLERDLQDVIAEKRRLEIRVEQLMDSRNTDERVLNLCQEELLESQEEAKYKEDGLRGKIDGIRNELENEKMKSQTLEENLIVADKERGMLKMEVQELMQRHKWEMANKEQNLKHIENQLEELKEHSRIESTEQESNDKKTIADLNKKLELEKAHKKAVINKLEEEMAKRQPLKKGDKGITKSALIKKEREIVGFKKCRTGRILMSLQQENQHLQQKMTEMYMDSEKQGEHFSYQMQEMSQLIETLRDELKEYKDEYPQRHSVNRYEDKRSLDSREGIPTSISHQNIQIDGWLSLRDMTKKSRKPKVVFKKKSDHQLTLFFQWTNYFVILNEYAFTIYTDEKHLNSVVLTIEAGAMAHVRHVTSADLRNVDDNQLPKIFHIMYDDTSSNSSRHASNSDLSICEPREEGWKRHDFQELSYHTRTYCDDCGKKLSDFIRPTPAFECKNCHYKTHKEHIAQGTITMCRYTGLSRELVLMGTHKEVCNQWVSQLRRFIEASRPANVSVSRVSSRRHVGGPGSSA.

Residues 68–330 enclose the Protein kinase domain; sequence FRQLKVIGRG…VDEIRNHKFF (263 aa). Residues 74 to 82 and Lys-97 each bind ATP; that span reads IGRGAFGEV. Residue Asp-190 is the Proton acceptor of the active site. In terms of domain architecture, AGC-kinase C-terminal spans 331-402; that stretch reads KNDEWTFETL…SNEYSPVKKL (72 aa). 2 coiled-coil regions span residues 436-844 and 875-933; these read EEQY…MAKR and GRIL…EYPQ. Residues 784–846 form the RhoBD domain; it reads EQNLKHIENQ…LEEEMAKRQP (63 aa). Residues 961-1171 form the PH domain; that stretch reads IQIDGWLSLR…SQLRRFIEAS (211 aa). The segment at 1085-1138 adopts a Phorbol-ester/DAG-type zinc-finger fold; that stretch reads RHDFQELSYHTRTYCDDCGKKLSDFIRPTPAFECKNCHYKTHKEHIAQGTITMC.

This sequence belongs to the protein kinase superfamily. AGC Ser/Thr protein kinase family. As to quaternary structure, interacts with rho-1. Requires Mg(2+) as cofactor.

It is found in the cytoplasm. It localises to the cytoskeleton. Its subcellular location is the cleavage furrow. It carries out the reaction L-seryl-[protein] + ATP = O-phospho-L-seryl-[protein] + ADP + H(+). The catalysed reaction is L-threonyl-[protein] + ATP = O-phospho-L-threonyl-[protein] + ADP + H(+). With respect to regulation, activated by rho-1 binding. Functionally, negatively regulates mel-11 to relieve the inhibition of mlc-4, allowing contraction of the circumferentially oriented microfilaments in epidermal cells and thereby regulating myosin II contractility during spermathecal contraction, cleavage furrow contraction in early embryos, and embryonic elongation and morphogenesis. Required for P-cell migration. May also play a role in oocyte cellularization. The polypeptide is Rho-associated protein kinase let-502 (Caenorhabditis briggsae).